The chain runs to 579 residues: Probable N-acetylgalactosaminyltransferase 9 (579 aa).

Over 1-12 the chain is Cytoplasmic; that stretch reads MLRYIIPRKKGT. Residues 13-30 traverse the membrane as a helical; Signal-anchor for type II membrane protein segment; that stretch reads FVIAAFLTVAFFCIVAYH. The Lumenal segment spans residues 31–579; it reads RNDRRRTKFQ…KWNFIDPAKA (549 aa). N67 carries N-linked (GlcNAc...) asparagine glycosylation. 5 cysteine pairs are disulfide-bonded: C123–C356, C347–C427, C464–C483, C507–C520, and C545–C562. Residues 133–243 are catalytic subdomain A; the sequence is LPKTSVIIIF…HGWLEPIVQR (111 aa). Substrate contacts are provided by D174 and R204. D227 contributes to the Mn(2+) binding site. S228 provides a ligand contact to substrate. H229 provides a ligand contact to Mn(2+). A catalytic subdomain B region spans residues 302–364; sequence YIRSPTMAGG…PCSHVGHIFR (63 aa). Residue W333 participates in substrate binding. H361 is a Mn(2+) binding site. 3 residues coordinate substrate: R364, H367, and Y369. N370 is a glycosylation site (N-linked (GlcNAc...) asparagine). Positions 450–574 constitute a Ricin B-type lectin domain; that stretch reads AYGALHTVVS…KDEHQKWNFI (125 aa).

Belongs to the glycosyltransferase 2 family. GalNAc-T subfamily. Requires Mn(2+) as cofactor.

It is found in the golgi apparatus membrane. It participates in protein modification; protein glycosylation. In terms of biological role, probable glycopeptide transferase involved in O-linked oligosaccharide biosynthesis. Glycopeptide transferases catalyze the transfer of an N-acetyl-D-galactosamine residue to an already glycosylated peptide. In contrast to other members of the family, it does not act as a peptide transferase that transfers GalNAc onto serine or threonine residue on peptides that have been tested. Some peptide transferase activity is however not excluded, considering that its appropriate peptide substrate may remain unidentified. This Caenorhabditis elegans protein is Probable N-acetylgalactosaminyltransferase 9 (gly-9).